We begin with the raw amino-acid sequence, 308 residues long: 4-hydroxyproline 2-epimerase (308 aa).

C88 functions as the Proton acceptor in the catalytic mechanism. Residues 89-90, H208, and D232 each bind substrate; that span reads GH. C236 functions as the Proton donor in the catalytic mechanism. Position 237–238 (237–238) interacts with substrate; sequence GT.

It belongs to the proline racemase family.

The catalysed reaction is trans-4-hydroxy-L-proline = cis-4-hydroxy-D-proline. In terms of biological role, catalyzes the epimerization of trans-4-hydroxy-L-proline (t4LHyp) to cis-4-hydroxy-D-proline (c4DHyp). Is likely involved in a degradation pathway that converts t4LHyp to alpha-ketoglutarate. Can also catalyze the epimerization of trans-3-hydroxy-L-proline (t3LHyp) to cis-3-hydroxy-D-proline (c3DHyp), albeit with 200-fold lower efficiency. The polypeptide is 4-hydroxyproline 2-epimerase (Pseudomonas putida (strain ATCC 700007 / DSM 6899 / JCM 31910 / BCRC 17059 / LMG 24140 / F1)).